Here is a 169-residue protein sequence, read N- to C-terminus: Crossover junction endodeoxyribonuclease RuvC (169 aa).

Catalysis depends on residues D7, E67, and D140. 3 residues coordinate Mg(2+): D7, E67, and D140.

This sequence belongs to the RuvC family. As to quaternary structure, homodimer which binds Holliday junction (HJ) DNA. The HJ becomes 2-fold symmetrical on binding to RuvC with unstacked arms; it has a different conformation from HJ DNA in complex with RuvA. In the full resolvosome a probable DNA-RuvA(4)-RuvB(12)-RuvC(2) complex forms which resolves the HJ. Mg(2+) is required as a cofactor.

The protein localises to the cytoplasm. It catalyses the reaction Endonucleolytic cleavage at a junction such as a reciprocal single-stranded crossover between two homologous DNA duplexes (Holliday junction).. The RuvA-RuvB-RuvC complex processes Holliday junction (HJ) DNA during genetic recombination and DNA repair. Endonuclease that resolves HJ intermediates. Cleaves cruciform DNA by making single-stranded nicks across the HJ at symmetrical positions within the homologous arms, yielding a 5'-phosphate and a 3'-hydroxyl group; requires a central core of homology in the junction. The consensus cleavage sequence is 5'-(A/T)TT(C/G)-3'. Cleavage occurs on the 3'-side of the TT dinucleotide at the point of strand exchange. HJ branch migration catalyzed by RuvA-RuvB allows RuvC to scan DNA until it finds its consensus sequence, where it cleaves and resolves the cruciform DNA. This Clostridioides difficile (strain 630) (Peptoclostridium difficile) protein is Crossover junction endodeoxyribonuclease RuvC.